The chain runs to 546 residues: MAKDIEYNETARRKLLEGVNKLANAVKVTLGPKGRNVVIDKKFGAPTITKDGVTVAKEIELEDPLENMGAQMVKEVSTKTNDVAGDGTTTATILAQSIINEGLKNVTAGANPMSLKRGIDKAVTAAVESIQKRAVKIENKKDIANVASISANNDNTIGNLIADAMDKVGKDGVITVEEAKSIETTLDVVEGMQFDRGYISPYMVTDAESMVATLNDPFILIYDKKISSMKDLIHILEKVAQAGKPLVIISEEVEGEALATIVVNTLRKTISCVAVKAPGFGDRRKSMLEDIAILTGGQVISEDLGMKLENTTLQMLGRANKVTVDKENTTIIEGKGQTKEIQGRIGQIKKQIEDTTSEYDREKLQERLAKLAGGVAVIHVGAATEVEMKEKKARVEDALSATRAAVEEGIVPGGGLTLLKAQEAVGSLKLDGDEATGAKIIFRALEEPIRMITSNAGLEGSVIVEHAKAKKGNEGFNALTMVWEDMIQAGVVDPAKVVRSALQNAASIGSMILTTEVTITDKPDKDAPNPMAGMGGGGMGGMGGMM.

ATP-binding positions include 29-32, lysine 50, 86-90, glycine 414, 477-479, and aspartate 493; these read TLGP, DGTTT, and NAL.

This sequence belongs to the chaperonin (HSP60) family. As to quaternary structure, forms a cylinder of 14 subunits composed of two heptameric rings stacked back-to-back. Interacts with the co-chaperonin GroES.

The protein localises to the cytoplasm. It catalyses the reaction ATP + H2O + a folded polypeptide = ADP + phosphate + an unfolded polypeptide.. Its function is as follows. Together with its co-chaperonin GroES, plays an essential role in assisting protein folding. The GroEL-GroES system forms a nano-cage that allows encapsulation of the non-native substrate proteins and provides a physical environment optimized to promote and accelerate protein folding. The protein is Chaperonin GroEL of Leptospira interrogans serogroup Icterohaemorrhagiae serovar Lai (strain 56601).